Reading from the N-terminus, the 86-residue chain is UPF0335 protein BruAb1_1737 (86 aa).

This sequence belongs to the UPF0335 family.

In Brucella abortus biovar 1 (strain 9-941), this protein is UPF0335 protein BruAb1_1737.